We begin with the raw amino-acid sequence, 563 residues long: MSTQIFASSSQNEKIHKILRPTKKLQPSVWGERFLHYNISEQELRYKQQQVEELKAVVKKEIFGESAYDVSHQLKLINVVERLGLSYHFESEIENELESIYNKSVDQNYILKDENLHDASLRFRLLRQHGFRVSSADIFEKFKDEDGNFKECLVSDTIGLLSLYEASHLSCVGENILDEALDFTTTHLTEFLANKKEHDDPLSKEISQALERPLRKSLERLAARHFISIYANETSHNKVLLQLAKLDFNLLQSIHKKELSEISRWWKESDFVHKFPFARDRIVELYLWILAVYYEPQYYLARNILTKTIALASIADDIYDEYGTIEELELLTEAVERWDINFIDKLNPEYLQTFYKELLNSYEEFEQALSKEETYRVHYAKERFKELLRSSLEVAWWLKEGRVPSFDEYLKISLINCGYHMLIVSSLIGMKGSIVTKEVFEWLSIDRKIVRASVTICRLMDDIAEYKFEQEKNEEPSAVECYMKQYGVSEEEAYDELNKRVVNAWKEINEELLKPTGVASPILVRALNFSKFMDLFYKNGDGYTQVGKVTKHSVAALLIHPIP.

Residues D316, D320, D461, and E469 each coordinate Mg(2+). Residues 316-320 (DDIYD) carry the DDXXD motif motif.

It belongs to the terpene synthase family. Tpsa subfamily. Mg(2+) serves as cofactor. As to expression, expressed in young leaves. Detected in trichomes and cones.

The catalysed reaction is (2E,6E)-farnesyl diphosphate = (+)-(R)-germacrene A + diphosphate. Its pathway is secondary metabolite biosynthesis; terpenoid biosynthesis. In terms of biological role, sesquiterpene synthase that catalyzes the formation of germacrene A. Can use farnesyl diphosphate as substrate, but not geranyl diphosphate or geranylgeranyl diphosphate. Beta-elemene, the initially measured product in the assay, is derived nonenzymatically from germacrene A. The sequence is that of Germacrene-A synthase from Humulus lupulus (European hop).